The primary structure comprises 116 residues: Insulin (116 aa).

A signal peptide spans 1–24 (MAALWLQSFSLLVLLVVSWPGSQA). 3 disulfides stabilise this stretch: cysteine 32–cysteine 102, cysteine 44–cysteine 115, and cysteine 101–cysteine 106. A propeptide spans 56 to 93 (DVDQLLGFLPPKSGGAAAAGADNEVAEFAFKDQMEMMV) (c peptide).

This sequence belongs to the insulin family. In terms of assembly, heterodimer of a B chain and an A chain linked by two disulfide bonds.

The protein resides in the secreted. Insulin decreases blood glucose concentration. It increases cell permeability to monosaccharides, amino acids and fatty acids. It accelerates glycolysis, the pentose phosphate cycle, and glycogen synthesis in liver. In Lophius americanus (American angler), this protein is Insulin (ins).